We begin with the raw amino-acid sequence, 382 residues long: Ribosomal RNA large subunit methyltransferase F (382 aa).

2 disordered regions span residues 1-53 (MTKP…LHRD) and 269-288 (NRAS…KSQL). The segment covering 8 to 24 (ASRKPVTKSGRNSKRSR) has biased composition (basic residues). Residues 269–286 (NRASKGHKLEPKAPKDKS) are compositionally biased toward basic and acidic residues.

This sequence belongs to the methyltransferase superfamily. METTL16/RlmF family.

The protein resides in the cytoplasm. The catalysed reaction is adenosine(1618) in 23S rRNA + S-adenosyl-L-methionine = N(6)-methyladenosine(1618) in 23S rRNA + S-adenosyl-L-homocysteine + H(+). In terms of biological role, specifically methylates the adenine in position 1618 of 23S rRNA. The sequence is that of Ribosomal RNA large subunit methyltransferase F from Shewanella woodyi (strain ATCC 51908 / MS32).